The primary structure comprises 162 residues: Calcium-binding protein 4b (162 aa).

EF-hand domains are found at residues 10 to 45 (ELTN…CKYP), 46 to 81 (NPTL…DYII), 85 to 120 (TCLK…SGSN), and 123 to 158 (QAKV…YFEI). Ca(2+) is bound by residues aspartate 23, asparagine 25, aspartate 27, glutamine 29, glutamate 34, aspartate 59, aspartate 61, aspartate 63, lysine 65, and glutamate 70. Ca(2+) contacts are provided by aspartate 136, aspartate 138, aspartate 140, cysteine 142, and glutamate 147.

In Dictyostelium discoideum (Social amoeba), this protein is Calcium-binding protein 4b (cbpD2).